The following is a 239-amino-acid chain: Probable phosphatase Csac_1188 (239 aa).

9 residues coordinate Zn(2+): His-8, His-10, His-16, His-41, Glu-74, His-102, His-132, Asp-192, and His-194.

The protein belongs to the PHP family. Requires Zn(2+) as cofactor.

The polypeptide is Probable phosphatase Csac_1188 (Caldicellulosiruptor saccharolyticus (strain ATCC 43494 / DSM 8903 / Tp8T 6331)).